Reading from the N-terminus, the 362-residue chain is Dihydroorotate dehydrogenase (quinone) (362 aa).

Residues 60-64 and Thr84 each bind FMN; that span reads AGFDK. Lys64 is a substrate binding site. 109 to 113 lines the substrate pocket; it reads NRMGF. 2 residues coordinate FMN: Asn137 and Asn168. Substrate is bound at residue Asn168. Catalysis depends on Ser171, which acts as the Nucleophile. Asn173 lines the substrate pocket. 2 residues coordinate FMN: Lys213 and Ser241. Substrate is bound at residue 242–243; sequence NT. FMN contacts are provided by residues Gly264, Gly293, and 314–315; that span reads YS.

This sequence belongs to the dihydroorotate dehydrogenase family. Type 2 subfamily. In terms of assembly, monomer. FMN is required as a cofactor.

It localises to the cell membrane. The catalysed reaction is (S)-dihydroorotate + a quinone = orotate + a quinol. The protein operates within pyrimidine metabolism; UMP biosynthesis via de novo pathway; orotate from (S)-dihydroorotate (quinone route): step 1/1. Its function is as follows. Catalyzes the conversion of dihydroorotate to orotate with quinone as electron acceptor. The polypeptide is Dihydroorotate dehydrogenase (quinone) (Bartonella henselae (strain ATCC 49882 / DSM 28221 / CCUG 30454 / Houston 1) (Rochalimaea henselae)).